Consider the following 777-residue polypeptide: Protein argonaute (777 aa).

Positions M1–A107 are N-terminal domain. The tract at residues L108 to A182 is linker L1. The PAZ domain stretch occupies residues S183–G243. The linker L2 stretch occupies residues S244–Y341. The interval A342 to G509 is mid domain. Residues G445–S757 form the Piwi domain. Positions T510–L777 are PIWI domain. L777 lines the Mg(2+) pocket.

This sequence belongs to the argonaute family. Long pAgo subfamily. The cofactor is Mg(2+).

A catalytically inactive argonaute protein. Binds 5'-phosphorylated RNA as the guide (gRNA) and short DNA as target DNA (tDNA); does not bind other nucleic acid combinations, does not bind tDNA alone. Has highest affinity for gRNA that begins with 5'-phospho-U and poor affinity for gRNA with 5'-OH. Upon expression in E.coli, plasmid sequences are found in RsAgo, its induction leads to plasmid degradation and suppression of genes encoded on foreign plasmids, suggesting it may also interfere with transcription. Does not interact with preformed gRNA:tDNA duplexes. Mismatches and nt bulges are tolerated in the ternary complex, however, they significantly reduce the affinity of RsAgo:gRNA for tDNA. Mismatched tDNA can cause dissociation of gRNA from RsAgo. In situ binds 2 populations of RNA (15-19 and 45 nucleotides, nt) and a population of ssDNA 22-24 nt in length. The small sense RNA is probably derived from mRNA degradation and strongly enriched for U in the first and U/C in the second positions. The small DNA is enriched for sequences complementary to the RNA, with 3 nt overhangs on both ends; another nuclease may trim the ends. The sequences are largely derived from exogenous plasmids or genome-encoded foreign elements such as prophages and transposons. Forms a ternary complex with gRNA and double-stranded tDNA only when the tDNA is open. The sequence is that of Protein argonaute from Cereibacter sphaeroides (strain ATCC 17025 / ATH 2.4.3) (Rhodobacter sphaeroides).